The sequence spans 149 residues: D-aminoacyl-tRNA deacylase (149 aa).

The short motif at 137-138 (GP) is the Gly-cisPro motif, important for rejection of L-amino acids element.

This sequence belongs to the DTD family. Homodimer.

The protein localises to the cytoplasm. It catalyses the reaction glycyl-tRNA(Ala) + H2O = tRNA(Ala) + glycine + H(+). It carries out the reaction a D-aminoacyl-tRNA + H2O = a tRNA + a D-alpha-amino acid + H(+). In terms of biological role, an aminoacyl-tRNA editing enzyme that deacylates mischarged D-aminoacyl-tRNAs. Also deacylates mischarged glycyl-tRNA(Ala), protecting cells against glycine mischarging by AlaRS. Acts via tRNA-based rather than protein-based catalysis; rejects L-amino acids rather than detecting D-amino acids in the active site. By recycling D-aminoacyl-tRNA to D-amino acids and free tRNA molecules, this enzyme counteracts the toxicity associated with the formation of D-aminoacyl-tRNA entities in vivo and helps enforce protein L-homochirality. This Syntrophomonas wolfei subsp. wolfei (strain DSM 2245B / Goettingen) protein is D-aminoacyl-tRNA deacylase.